We begin with the raw amino-acid sequence, 184 residues long: ATP synthase subunit b 1 (184 aa).

Residues 4–24 (LSILAVLAASPAMAATGPFLS) form a helical membrane-spanning segment.

It belongs to the ATPase B chain family. F-type ATPases have 2 components, F(1) - the catalytic core - and F(0) - the membrane proton channel. F(1) has five subunits: alpha(3), beta(3), gamma(1), delta(1), epsilon(1). F(0) has three main subunits: a(1), b(2) and c(10-14). The alpha and beta chains form an alternating ring which encloses part of the gamma chain. F(1) is attached to F(0) by a central stalk formed by the gamma and epsilon chains, while a peripheral stalk is formed by the delta and b chains.

It is found in the cell inner membrane. Functionally, f(1)F(0) ATP synthase produces ATP from ADP in the presence of a proton or sodium gradient. F-type ATPases consist of two structural domains, F(1) containing the extramembraneous catalytic core and F(0) containing the membrane proton channel, linked together by a central stalk and a peripheral stalk. During catalysis, ATP synthesis in the catalytic domain of F(1) is coupled via a rotary mechanism of the central stalk subunits to proton translocation. Component of the F(0) channel, it forms part of the peripheral stalk, linking F(1) to F(0). The sequence is that of ATP synthase subunit b 1 from Cereibacter sphaeroides (strain ATCC 17023 / DSM 158 / JCM 6121 / CCUG 31486 / LMG 2827 / NBRC 12203 / NCIMB 8253 / ATH 2.4.1.) (Rhodobacter sphaeroides).